Consider the following 397-residue polypeptide: Tryptophan synthase beta chain (397 aa).

N6-(pyridoxal phosphate)lysine is present on lysine 87.

This sequence belongs to the TrpB family. In terms of assembly, tetramer of two alpha and two beta chains. It depends on pyridoxal 5'-phosphate as a cofactor.

It catalyses the reaction (1S,2R)-1-C-(indol-3-yl)glycerol 3-phosphate + L-serine = D-glyceraldehyde 3-phosphate + L-tryptophan + H2O. It participates in amino-acid biosynthesis; L-tryptophan biosynthesis; L-tryptophan from chorismate: step 5/5. In terms of biological role, the beta subunit is responsible for the synthesis of L-tryptophan from indole and L-serine. In Citrobacter koseri (strain ATCC BAA-895 / CDC 4225-83 / SGSC4696), this protein is Tryptophan synthase beta chain.